The primary structure comprises 590 residues: EGF-like and EMI domain-containing protein 1 (590 aa).

Positions 1-23 (MTSPLCFWCFCVWAAANWPPGSA) are cleaved as a signal peptide. The 61-residue stretch at 44–104 (LSRPCAQAFI…RCCPGWIQWD (61 aa)) folds into the EMI domain. The EGF-like 1 domain maps to 105-145 (DEPGCFSSLSSLGTHFSGRECSYQDTRQCLCSQGFHGPHCQ). 11 cysteine pairs are disulfide-bonded: cysteine 109–cysteine 125, cysteine 135–cysteine 144, cysteine 168–cysteine 179, cysteine 175–cysteine 188, cysteine 190–cysteine 203, cysteine 209–cysteine 219, cysteine 215–cysteine 228, cysteine 230–cysteine 243, cysteine 249–cysteine 260, cysteine 256–cysteine 269, and cysteine 271–cysteine 284. Residues 164 to 204 (NVDECAVVNGGCQQRCINTLGTFHCECDTGYRRHADERTCI) enclose the EGF-like 2; calcium-binding domain. The EGF-like 3 domain occupies 205–244 (KTDPCAGANGCAHLCQTENGMARCACHAGYQLSEDKKACE). An EGF-like 4; calcium-binding domain is found at 245 to 285 (DINECAGELAPCAHHCVNSKGSFTCTCHPGFELGADRKHCY). Residues 393-424 (RLAQNPPQPFPYLDPSLTASYEDEDNDDADSE) form a disordered region. The segment covering 413 to 424 (YEDEDNDDADSE) has biased composition (acidic residues). One can recognise an EGF-like 5 domain in the interval 445 to 481 (FGLDCSLSCEDCMNGGRCQEGKSGCLCPAEWTGLICN). 3 disulfide bridges follow: cysteine 449/cysteine 462, cysteine 456/cysteine 469, and cysteine 471/cysteine 480.

This is EGF-like and EMI domain-containing protein 1 (Egfem1) from Mus musculus (Mouse).